We begin with the raw amino-acid sequence, 307 residues long: MISVRTLVISEYGAYVYVKKNMLVIKKGDKKVEISPSEVDEILITVSCSISTSALSLALTHGISVMFLNSRETPWGILLPSIVTETVKTKKAQYEAIVVRKDNRYGEEIISSKIYNQSVHLKYWARVTGTKNDYKELLDKDEPAAARVYWQNISQLLPKDIGFDGRDVDGTDQFNMALNYSYAILYNTIFKYLVIAGLDPYLGFIHKDRPGNESLVYDFSEMFKPYIDFLLVRALRSGFRLKVKGGLIEENSRGDLAKLIRKGMEENVKEESDHNPKTLIQAIRAHAVKLASSIREGKEYRGFKLVM.

Glu-142, His-206, and Glu-221 together coordinate Mn(2+).

Belongs to the CRISPR-associated endonuclease Cas1 family. Homodimer, forms a heterotetramer with a Cas2 homodimer. Forms oligomers, probably binds nucleic acids as a homodimer. Mg(2+) is required as a cofactor. It depends on Mn(2+) as a cofactor.

CRISPR (clustered regularly interspaced short palindromic repeat), is an adaptive immune system that provides protection against mobile genetic elements (viruses, transposable elements and conjugative plasmids). CRISPR clusters contain spacers, sequences complementary to antecedent mobile elements, and target invading nucleic acids. CRISPR clusters are transcribed and processed into CRISPR RNA (crRNA). Acts as a dsDNA endonuclease. Involved in the integration of spacer DNA into the CRISPR cassette. In terms of biological role, in vitro catalyzes a concerted transesterification reaction on branched DNA, as would be expected during integration of protospacers into the CRISPR leader sequence; Cas2 is not required in vitro. This reaction requires a 3'-OH group at the branch point. Binds ss- and dsDNA and ss- and dsRNA with approximately equal affinity. May be able to anneal complementary DNA strands. The chain is CRISPR-associated endonuclease Cas1 2 from Saccharolobus solfataricus (strain ATCC 35092 / DSM 1617 / JCM 11322 / P2) (Sulfolobus solfataricus).